The primary structure comprises 323 residues: tRNA dimethylallyltransferase (323 aa).

Residue 12 to 19 participates in ATP binding; that stretch reads GPTASGKT. Residue 14–19 participates in substrate binding; the sequence is TASGKT. Interaction with substrate tRNA stretches follow at residues 37-40 and 161-165; these read DSAL and QRLVR.

The protein belongs to the IPP transferase family. Monomer. Mg(2+) serves as cofactor.

The catalysed reaction is adenosine(37) in tRNA + dimethylallyl diphosphate = N(6)-dimethylallyladenosine(37) in tRNA + diphosphate. Functionally, catalyzes the transfer of a dimethylallyl group onto the adenine at position 37 in tRNAs that read codons beginning with uridine, leading to the formation of N6-(dimethylallyl)adenosine (i(6)A). The sequence is that of tRNA dimethylallyltransferase from Stutzerimonas stutzeri (strain A1501) (Pseudomonas stutzeri).